The primary structure comprises 312 residues: Ribosomal RNA small subunit methyltransferase H (312 aa).

The tract at residues 1–24 (MNIMTANQGAVSPSQTESEASPPT) is disordered. Residues 55 to 57 (AGH), Asp72, Tyr96, Asp117, and Gln124 contribute to the S-adenosyl-L-methionine site. A disordered region spans residues 288-312 (EQVDNPRARSAKLRVGERAAAPEGS).

It belongs to the methyltransferase superfamily. RsmH family.

It is found in the cytoplasm. It catalyses the reaction cytidine(1402) in 16S rRNA + S-adenosyl-L-methionine = N(4)-methylcytidine(1402) in 16S rRNA + S-adenosyl-L-homocysteine + H(+). Its function is as follows. Specifically methylates the N4 position of cytidine in position 1402 (C1402) of 16S rRNA. This Deinococcus radiodurans (strain ATCC 13939 / DSM 20539 / JCM 16871 / CCUG 27074 / LMG 4051 / NBRC 15346 / NCIMB 9279 / VKM B-1422 / R1) protein is Ribosomal RNA small subunit methyltransferase H.